The primary structure comprises 493 residues: Succinate-semialdehyde dehydrogenase [NADP(+)] 2 (493 aa).

Residue 242-247 coordinates NAD(+); that stretch reads GSTNVG. Glu264 is a catalytic residue. Cys298 functions as the Nucleophile in the catalytic mechanism.

This sequence belongs to the aldehyde dehydrogenase family. As to quaternary structure, homotetramer.

The protein localises to the cytoplasm. It catalyses the reaction succinate semialdehyde + NAD(+) + H2O = succinate + NADH + 2 H(+). It carries out the reaction succinate semialdehyde + NADP(+) + H2O = succinate + NADPH + 2 H(+). It functions in the pathway amino-acid degradation; 4-aminobutanoate degradation. Its function is as follows. Catalyzes the oxidation of succinate semialdehyde to succinate. Can utilize both NAD(+) or NADP(+) as a coenzyme. Functions in the GABA shunt, which allows to bypass 2 reactions in the TCA cycle by removing alpha-ketoglutarate from the cycle and feeding succinate and NADH back into the cycle. This chain is Succinate-semialdehyde dehydrogenase [NADP(+)] 2 (ssd2), found in Schizosaccharomyces pombe (strain 972 / ATCC 24843) (Fission yeast).